The sequence spans 387 residues: Ferrochelatase (387 aa).

Positions 1 to 318 (MGRVGVLLLN…VFIDALAQMV (318 aa)) are ferrochelatase. Fe cation is bound by residues H196 and E277. Residues 319–387 (MDSLNDPPCT…QGPLHFVGLL (69 aa)) form a hlip domain region.

The protein in the N-terminal section; belongs to the ferrochelatase family. It in the C-terminal section; belongs to the Hlip family.

The protein localises to the cytoplasm. It carries out the reaction heme b + 2 H(+) = protoporphyrin IX + Fe(2+). It functions in the pathway porphyrin-containing compound metabolism; protoheme biosynthesis; protoheme from protoporphyrin-IX: step 1/1. In terms of biological role, catalyzes the ferrous insertion into protoporphyrin IX. The Hlip proteins might regulate tetrapyrrole biosynthesis, maybe at the level of aminolevulinic acid synthesis. Deletion of 4 to 5 members of the Hlip family (always including this member) suggests the proteins are involved in regulation of chlorophyll biosynthesis, in stabilization of chlorophyll-binding proteins and/or in reuse of chlorophylls, and may regulate tetrapyrrole biosynthesis. The Hlip proteins probably stabilize PSII assembly intermediates. This Synechocystis sp. (strain ATCC 27184 / PCC 6803 / Kazusa) protein is Ferrochelatase.